The sequence spans 310 residues: Pantothenate kinase (310 aa).

Residue 95-102 (GSVAVGKS) participates in ATP binding.

Belongs to the prokaryotic pantothenate kinase family.

It is found in the cytoplasm. The enzyme catalyses (R)-pantothenate + ATP = (R)-4'-phosphopantothenate + ADP + H(+). It participates in cofactor biosynthesis; coenzyme A biosynthesis; CoA from (R)-pantothenate: step 1/5. This is Pantothenate kinase from Rhodococcus jostii (strain RHA1).